We begin with the raw amino-acid sequence, 958 residues long: Translation initiation factor IF-2 (958 aa).

Residues 50–67 are compositionally biased toward low complexity; the sequence is FKPAAAPKVEAKPAAPKV. 2 disordered regions span residues 50 to 224 and 288 to 374; these read FKPA…RIDF and EVVP…HELP. 3 stretches are compositionally biased toward basic and acidic residues: residues 68–89, 96–118, and 138–153; these read SAEK…EEAK, SAEK…EAKP, and FKAE…AERR. A compositionally biased stretch (low complexity) spans 157-169; the sequence is KGNNRDQQQNGNR. 2 stretches are compositionally biased toward basic and acidic residues: residues 185–195 and 290–323; these read RDNRRFNDQAK and VPEK…DGPR. Residues 337–346 show a composition bias toward low complexity; that stretch reads NQKNSNWNNN. Positions 365–374 are enriched in basic and acidic residues; sequence VTERKFHELP. One can recognise a tr-type G domain in the interval 460–627; the sequence is ERPPVVTIMG…TVLLVAEIQE (168 aa). Residues 469–476 form a G1 region; that stretch reads GHVDHGKT. 469 to 476 lines the GTP pocket; it reads GHVDHGKT. The segment at 494–498 is G2; the sequence is GITQH. Residues 515–518 are G3; the sequence is DTPG. GTP contacts are provided by residues 515-519 and 569-572; these read DTPGH and NKID. The G4 stretch occupies residues 569-572; it reads NKID. The G5 stretch occupies residues 605-607; sequence SAK.

The protein belongs to the TRAFAC class translation factor GTPase superfamily. Classic translation factor GTPase family. IF-2 subfamily.

Its subcellular location is the cytoplasm. In terms of biological role, one of the essential components for the initiation of protein synthesis. Protects formylmethionyl-tRNA from spontaneous hydrolysis and promotes its binding to the 30S ribosomal subunits. Also involved in the hydrolysis of GTP during the formation of the 70S ribosomal complex. This chain is Translation initiation factor IF-2, found in Streptococcus pneumoniae serotype 4 (strain ATCC BAA-334 / TIGR4).